The primary structure comprises 429 residues: Adenylosuccinate synthetase (429 aa).

GTP-binding positions include 13–19 (GDEGKGK) and 41–43 (GHT). The Proton acceptor role is filled by Asp14. The Mg(2+) site is built by Asp14 and Gly41. IMP is bound by residues 14-17 (DEGK), 39-42 (NAGH), Thr130, Arg144, Gln224, Thr239, and Arg303. The active-site Proton donor is the His42. Position 299-305 (299-305 (ATTGRAR)) interacts with substrate. Residues Arg305, 331–333 (KLD), and 412–414 (STG) contribute to the GTP site.

It belongs to the adenylosuccinate synthetase family. Homodimer. It depends on Mg(2+) as a cofactor.

It localises to the cytoplasm. It catalyses the reaction IMP + L-aspartate + GTP = N(6)-(1,2-dicarboxyethyl)-AMP + GDP + phosphate + 2 H(+). It functions in the pathway purine metabolism; AMP biosynthesis via de novo pathway; AMP from IMP: step 1/2. Functionally, plays an important role in the de novo pathway of purine nucleotide biosynthesis. Catalyzes the first committed step in the biosynthesis of AMP from IMP. This chain is Adenylosuccinate synthetase, found in Psychrobacter sp. (strain PRwf-1).